Here is a 192-residue protein sequence, read N- to C-terminus: Molybdenum cofactor cytidylyltransferase (192 aa).

Residue Asp101 coordinates Mg(2+).

Monomer. Interacts with the Moco-binding chaperone PaoD. Mg(2+) serves as cofactor. Mn(2+) is required as a cofactor.

It catalyses the reaction Mo-molybdopterin + CTP + H(+) = Mo-molybdopterin cytosine dinucleotide + diphosphate. Functionally, transfers a CMP moiety from CTP to Mo-molybdopterin (Mo-MPT) cofactor (Moco or molybdenum cofactor) to form Mo-molybdopterin cytosine dinucleotide (Mo-MCD) cofactor. Is specific for CTP; other nucleotides such as ATP and GTP cannot be utilized. Is also able to convert MPT to MCD in the absence of molybdate, however, with only one catalytic turnover. This Escherichia coli (strain K12) protein is Molybdenum cofactor cytidylyltransferase (mocA).